The following is a 272-amino-acid chain: TIP41-like protein (272 aa).

K106 carries the post-translational modification N6-acetyllysine. Positions 173–272 (RVMPSSFFLL…ADSQKSTQVE (100 aa)) are interaction with PPP2CA. S265 bears the Phosphoserine mark.

It belongs to the TIP41 family. As to quaternary structure, isoform 1 interacts with PPP2CA. Isoform 2 does not interact with PPP2CA. Interacts with PPP2CB, PPP4C and PPP6C. Interacts with IGBP1; the interaction is dependent on PPP2CA. Associates with a protein phosphatase 2A PP2A(C):IGBP1 complex. Interacts with PPP4C and PPP4R2.

It is found in the cytoplasm. Functionally, may be a allosteric regulator of serine/threonine-protein phosphatase 2A (PP2A). Isoform 1 inhibits catalytic activity of the PP2A(D) core complex in vitro. The PP2A(C):TIPRL complex does not show phosphatase activity. Acts as a negative regulator of serine/threonine-protein phosphatase 4 probably by inhibiting the formation of the active PPP4C:PPP4R2 complex; the function is proposed to implicate it in DNA damage response by promoting H2AX phosphorylated on Ser-140 (gamma-H2AX). May play a role in the regulation of ATM/ATR signaling pathway controlling DNA replication and repair. The chain is TIP41-like protein (TIPRL) from Homo sapiens (Human).